A 1011-amino-acid chain; its full sequence is Phosphoenolpyruvate carboxylase (1011 aa).

Residues histidine 207 and lysine 658 contribute to the active site.

The protein belongs to the PEPCase type 1 family. Mg(2+) is required as a cofactor.

The enzyme catalyses oxaloacetate + phosphate = phosphoenolpyruvate + hydrogencarbonate. In terms of biological role, forms oxaloacetate, a four-carbon dicarboxylic acid source for the tricarboxylic acid cycle. This is Phosphoenolpyruvate carboxylase (ppc) from Thermosynechococcus vestitus (strain NIES-2133 / IAM M-273 / BP-1).